Reading from the N-terminus, the 317-residue chain is MYTKIIGTGSYLPEQVRTNADLEKMVETSDEWIVTRTGIRERHIAAPNETVATMGFTAANRALEMAGIDKDQIGLIVVATTSATHAFPSAACQIQSMLGIKGCPAFDVAAACAGFTYALSIADQYVKSGAVKHALVVGSDVLARTCDPSDRGTIIIFGDGAGAVVLSASEEPGIISTHLHADGRYGELLTLPNADRVNPDNPIYLTMAGNEVFKVAVTELAHIVDETLAANNLDRSELDWLVPHQANLRIISATAKKLGMSMDNVVVTLDRHGNTSAASVPCALDEAVRDGRIKAGQLVLLEAFGGGFTWGSALIRF.

Catalysis depends on residues Cys112 and His244. The segment at 245–249 (QANLR) is ACP-binding. Residue Asn274 is part of the active site.

Belongs to the thiolase-like superfamily. FabH family. In terms of assembly, homodimer.

The protein localises to the cytoplasm. It carries out the reaction malonyl-[ACP] + acetyl-CoA + H(+) = 3-oxobutanoyl-[ACP] + CO2 + CoA. It functions in the pathway lipid metabolism; fatty acid biosynthesis. In terms of biological role, catalyzes the condensation reaction of fatty acid synthesis by the addition to an acyl acceptor of two carbons from malonyl-ACP. Catalyzes the first condensation reaction which initiates fatty acid synthesis and may therefore play a role in governing the total rate of fatty acid production. Possesses both acetoacetyl-ACP synthase and acetyl transacylase activities. Its substrate specificity determines the biosynthesis of branched-chain and/or straight-chain of fatty acids. This Salmonella arizonae (strain ATCC BAA-731 / CDC346-86 / RSK2980) protein is Beta-ketoacyl-[acyl-carrier-protein] synthase III.